The following is a 232-amino-acid chain: Uracil-DNA glycosylase (232 aa).

Catalysis depends on Asp70, which acts as the Proton acceptor.

The protein belongs to the uracil-DNA glycosylase (UDG) superfamily. UNG family.

The protein localises to the cytoplasm. The catalysed reaction is Hydrolyzes single-stranded DNA or mismatched double-stranded DNA and polynucleotides, releasing free uracil.. Its function is as follows. Excises uracil residues from the DNA which can arise as a result of misincorporation of dUMP residues by DNA polymerase or due to deamination of cytosine. The chain is Uracil-DNA glycosylase from Campylobacter fetus subsp. fetus (strain 82-40).